The primary structure comprises 465 residues: Pleckstrin homology domain-containing family S member 1 (465 aa).

The PH domain maps to 14–129; sequence EVCKQDYFIK…WVSFMSSFRQ (116 aa). The span at 159–173 shows a compositional bias: polar residues; sequence PSSTSEAVGSSSPRN. 2 disordered regions span residues 159–179 and 258–283; these read PSST…QDKH and ETSH…GDLH. Basic and acidic residues predominate over residues 258-271; sequence ETSHESVDSSKEEP.

This is Pleckstrin homology domain-containing family S member 1 from Homo sapiens (Human).